Consider the following 524-residue polypeptide: Solute carrier family 2, facilitated glucose transporter member 2 (524 aa).

At 1–6 the chain is on the cytoplasmic side; sequence MTEDKI. The chain crosses the membrane as a helical span at residues 7 to 26; the sequence is TGTLVFAVLTAVLGSFQFGY. Over 27–89 the chain is Extracellular; it reads DIGVINAPQQ…SWAEEETTAS (63 aa). The N-linked (GlcNAc...) asparagine glycan is linked to asparagine 62. The helical transmembrane segment at 90–115 threads the bilayer; sequence ASLIIMLWSLSVSIFAIGGMIASFFG. The Cytoplasmic segment spans residues 116–126; it reads GMLGDRLGRIK. A helical membrane pass occupies residues 127 to 145; sequence AMLVANILSLVGALLMWFS. The Extracellular portion of the chain corresponds to 146–150; it reads KLGPS. The chain crosses the membrane as a helical span at residues 151–176; it reads HILIISGRGISGLYCGLISGLVPMYI. The Cytoplasmic segment spans residues 177–187; that stretch reads GEIAPTKFRGA. The chain crosses the membrane as a helical span at residues 188–211; the sequence is IGALHQLAIVTGILVSQIIGLDFL. Residue glutamine 193 participates in D-glucose binding. The Extracellular portion of the chain corresponds to 212–216; it reads LGNHE. The chain crosses the membrane as a helical span at residues 217–239; that stretch reads LWHILLGLSAVPAVLQSLMLFFC. Over 240–303 the chain is Cytoplasmic; the sequence is PESPRYLYIK…LFTNSSYRQP (64 aa). Residues 304–327 form a helical membrane-spanning segment; it reads ILVALMLHMAQQFSGINGIFYYST. D-glucose is bound by residues 314 to 315 and asparagine 320; that span reads QQ. Over 328–338 the chain is Extracellular; it reads SIFQTAGISQP. A helical transmembrane segment spans residues 339–360; it reads VYATIGVGAINTIFTALSVFLV. A D-glucose-binding site is contributed by asparagine 349. Over 361-366 the chain is Cytoplasmic; that stretch reads EKAGRR. A helical membrane pass occupies residues 367–389; that stretch reads SLFLIGMSGMFVCAIFMSVGLVL. The Extracellular segment spans residues 390–394; that stretch reads LDKLP. The helical transmembrane segment at 395 to 413 threads the bilayer; sequence WMSYVSMTAIFLFVSFFEI. 2 residues coordinate D-glucose: glutamate 412 and tryptophan 420. Residues 414-433 lie on the Cytoplasmic side of the membrane; sequence GPGPIPWFMVAEFFSQGPRP. The helical transmembrane segment at 434 to 458 threads the bilayer; sequence AALAMAAFSNWTCNFIIALCFQYIA. At 459 to 463 the chain is on the extracellular side; it reads DFCGP. Residues 464–482 traverse the membrane as a helical segment; the sequence is YVFFLFAGVVLVFTLFTFF. Topologically, residues 483 to 524 are cytoplasmic; sequence KVPETKGKSFEEIAAEFQKKSGSAQSPKAAVEMEFLGATETV. Position 523 is a phosphothreonine (threonine 523).

It belongs to the major facilitator superfamily. Sugar transporter (TC 2.A.1.1) family. Glucose transporter subfamily. Post-translationally, N-glycosylated; required for stability and retention at the cell surface of pancreatic beta cells.

The protein localises to the cell membrane. The catalysed reaction is D-glucose(out) = D-glucose(in). It catalyses the reaction D-fructose(out) = D-fructose(in). It carries out the reaction L-dehydroascorbate(out) = L-dehydroascorbate(in). The enzyme catalyses D-galactose(in) = D-galactose(out). Its activity is regulated as follows. D-glucose and maltose competitively inhibit fructose transport. D-glucose, D-fructose and maltose inhibit deoxyglucose transport. Its function is as follows. Facilitative hexose transporter that mediates the transport of glucose, fructose and galactose. Likely mediates the bidirectional transfer of glucose across the plasma membrane of hepatocytes and is responsible for uptake of glucose by the beta cells; may comprise part of the glucose-sensing mechanism of the beta cell. May also participate with the Na(+)/glucose cotransporter in the transcellular transport of glucose in the small intestine and kidney. Also able to mediate the transport of dehydroascorbate. The chain is Solute carrier family 2, facilitated glucose transporter member 2 from Sus scrofa (Pig).